We begin with the raw amino-acid sequence, 333 residues long: Acetyltransferase Pat (333 aa).

3',5'-cyclic AMP contacts are provided by residues 88-91 (GEIA), 98-99 (RS), and R138. Residues 156-318 (LMLRPVLPGD…GELSLGREMV (163 aa)) form the N-acetyltransferase domain. H173 provides a ligand contact to substrate. D214 provides a ligand contact to Mg(2+). Substrate-binding positions include 238–240 (FTV), 246–251 (GRGIGS), N277, and R286.

Homodimer. It depends on Mg(2+) as a cofactor.

Autoinhibited and allosterically activated by 3,5-cyclic adenosine monophosphate (cAMP). An extensive conformational rearrangement relieves this autoinhibition by means of a substrate-mimicking lid that covers the protein-substrate binding surface. Its function is as follows. Catalyzes specifically the acetylation of the epsilon-amino group of a highly conserved lysine residue in acetyl-CoA synthetase (ACS). This acetylation results in the inactivation of ACS activity and could be important for mycobacteria to adjust to environmental changes. This chain is Acetyltransferase Pat, found in Mycobacterium tuberculosis (strain ATCC 25618 / H37Rv).